Reading from the N-terminus, the 242-residue chain is Pyridoxine 5'-phosphate synthase (242 aa).

Asparagine 6 provides a ligand contact to 3-amino-2-oxopropyl phosphate. 8–9 contributes to the 1-deoxy-D-xylulose 5-phosphate binding site; that stretch reads DH. Residue arginine 17 participates in 3-amino-2-oxopropyl phosphate binding. Residue histidine 42 is the Proton acceptor of the active site. 1-deoxy-D-xylulose 5-phosphate-binding residues include arginine 44 and histidine 49. Catalysis depends on glutamate 69, which acts as the Proton acceptor. Threonine 99 provides a ligand contact to 1-deoxy-D-xylulose 5-phosphate. The active-site Proton donor is histidine 190. 3-amino-2-oxopropyl phosphate-binding positions include glycine 191 and 212–213; that span reads GH.

Belongs to the PNP synthase family. As to quaternary structure, homooctamer; tetramer of dimers.

It is found in the cytoplasm. The enzyme catalyses 3-amino-2-oxopropyl phosphate + 1-deoxy-D-xylulose 5-phosphate = pyridoxine 5'-phosphate + phosphate + 2 H2O + H(+). The protein operates within cofactor biosynthesis; pyridoxine 5'-phosphate biosynthesis; pyridoxine 5'-phosphate from D-erythrose 4-phosphate: step 5/5. Catalyzes the complicated ring closure reaction between the two acyclic compounds 1-deoxy-D-xylulose-5-phosphate (DXP) and 3-amino-2-oxopropyl phosphate (1-amino-acetone-3-phosphate or AAP) to form pyridoxine 5'-phosphate (PNP) and inorganic phosphate. This is Pyridoxine 5'-phosphate synthase from Neisseria meningitidis serogroup A / serotype 4A (strain DSM 15465 / Z2491).